Reading from the N-terminus, the 213-residue chain is rRNA N(6)-adenosine-methyltransferase Mettl5 (213 aa).

Residues glutamine 28, threonine 31, glycine 59, cysteine 62, and 108 to 109 (DV) contribute to the S-adenosyl-L-methionine site.

This sequence belongs to the methyltransferase superfamily. PrmA family. As to quaternary structure, heterodimer; heterodimerizes with Trmt112. As to expression, enriched in the brain.

It is found in the cytoplasm. The catalysed reaction is adenosine in rRNA + S-adenosyl-L-methionine = N(6)-methyladenosine in rRNA + S-adenosyl-L-homocysteine + H(+). Functionally, catalytic subunit of a heterodimer with Trmt112, which specifically methylates the 6th position of adenine in 18S rRNA. The polypeptide is rRNA N(6)-adenosine-methyltransferase Mettl5 (Drosophila melanogaster (Fruit fly)).